We begin with the raw amino-acid sequence, 695 residues long: Nucleoprotein (695 aa).

Coiled-coil stretches lie at residues 316–341 (VNVGEQYQQLREAAHDAEVKLQRRHE) and 372–400 (QTLAVLSQKREKLARLAAEIENNIAEDQG). Disordered stretches follow at residues 426–458 (RSINRPTALPPPVDNKIEHETEEDSSSSSSFVD) and 472–611 (TLEN…EDTR). Positions 474–484 (ENSVMAPSTTL) are enriched in polar residues. A compositionally biased stretch (basic and acidic residues) spans 502–516 (ISQKKQGNESTDPAR). The span at 529–547 (QEDDESEYTTDSQESDDQP) shows a compositional bias: acidic residues. A PTAP/PSAP motif motif is present at residues 603–606 (PSAP).

It belongs to the filoviruses nucleoprotein family. In terms of assembly, homooligomer. Homomultimerizes to form the nucleocapsid. Binds to viral genomic RNA. Interacts with VP35 and VP30 to form the nucleocapsid. Also interacts with VP24 and VP40. In terms of processing, phosphorylated.

It localises to the virion. Its subcellular location is the host cytoplasm. Its function is as follows. Encapsidates the genome, protecting it from nucleases. The encapsidated genomic RNA is termed the nucleocapsid and serves as template for transcription and replication. During replication, encapsidation by NP is coupled to RNA synthesis and all replicative products are resistant to nucleases. This Lake Victoria marburgvirus (strain Ravn-87) (MARV) protein is Nucleoprotein (NP).